The chain runs to 370 residues: CCA-adding enzyme (370 aa).

2 residues coordinate ATP: Gly-8 and Arg-11. CTP-binding residues include Gly-8 and Arg-11. 2 residues coordinate Mg(2+): Asp-21 and Asp-23. Arg-91, Arg-137, and Arg-140 together coordinate ATP. Positions 91, 137, and 140 each coordinate CTP.

The protein belongs to the tRNA nucleotidyltransferase/poly(A) polymerase family. Bacterial CCA-adding enzyme type 2 subfamily. It depends on Mg(2+) as a cofactor.

It carries out the reaction a tRNA precursor + 2 CTP + ATP = a tRNA with a 3' CCA end + 3 diphosphate. It catalyses the reaction a tRNA with a 3' CCA end + 2 CTP + ATP = a tRNA with a 3' CCACCA end + 3 diphosphate. Functionally, catalyzes the addition and repair of the essential 3'-terminal CCA sequence in tRNAs without using a nucleic acid template. Adds these three nucleotides in the order of C, C, and A to the tRNA nucleotide-73, using CTP and ATP as substrates and producing inorganic pyrophosphate. tRNA 3'-terminal CCA addition is required both for tRNA processing and repair. Also involved in tRNA surveillance by mediating tandem CCA addition to generate a CCACCA at the 3' terminus of unstable tRNAs. While stable tRNAs receive only 3'-terminal CCA, unstable tRNAs are marked with CCACCA and rapidly degraded. This is CCA-adding enzyme from Pseudomonas putida (strain W619).